The sequence spans 534 residues: Allene oxide synthase 1, chloroplastic (534 aa).

Disordered regions lie at residues 1 to 31 and 43 to 71; these read MAST…SSYR and EIPP…LPAQ. A chloroplast-targeting transit peptide spans 1–69; it reads MASTSLSLPS…SPPVKQAKLP (69 aa). Low complexity-rich tracts occupy residues 17-31 and 43-62; these read SHTS…SSYR and EIPP…SSPP. Residues K149, H180, and K184 each coordinate heme b. Residues N337 and K343 each contribute to the (13S)-hydroperoxy-(9Z,11E)-octadecadienoate site. (13S)-hydroperoxy-(9Z,11E,15Z)-octadecatrienoate is bound at residue N337. Positions 485 and 487 each coordinate heme b.

It belongs to the cytochrome P450 family. Requires heme b as cofactor. In terms of tissue distribution, expressed in flowers. Detected in stems and roots, but not in leaves and fruits under non-inducing conditions.

It localises to the plastid. The protein localises to the chloroplast. The enzyme catalyses (13S)-hydroperoxy-(9Z,11E,15Z)-octadecatrienoate = (9Z,13S,15Z)-12,13-epoxyoctadeca-9,11,15-trienoate + H2O. The catalysed reaction is (13S)-hydroperoxy-(9Z,11E)-octadecadienoate = (9Z,13S)-12,13-epoxyoctadeca-9,11-dienoate + H2O. In terms of biological role, cytochrome P450 of the CYP74A subfamily involved in the biosynthesis of jasmonic acid from lipoxygenase-derived hydroperoxides of free fatty acids. Catalyzes the synthesis of unstable allene oxide, which is further converted spontaneously by hydrolysis or cyclization. Can use 13S-hydroperoxy-9(Z),11(E),15(Z)-octadecatrienoic acid (13-HPOT) and 13S-hydroperoxy-9(Z),11(E)-octadecadienoic acid (13-HPOD) as substrates. In Solanum lycopersicum (Tomato), this protein is Allene oxide synthase 1, chloroplastic.